The primary structure comprises 762 residues: 5-methyltetrahydropteroyltriglutamate--homocysteine methyltransferase (762 aa).

5-methyltetrahydropteroyltri-L-glutamate-binding positions include Arg-17–Lys-20 and Lys-111. L-homocysteine is bound by residues Ile-435–Ser-437 and Glu-488. L-methionine is bound by residues Ile-435–Ser-437 and Glu-488. Residues Arg-519 to Cys-520 and Trp-565 each bind 5-methyltetrahydropteroyltri-L-glutamate. Asp-603 contacts L-homocysteine. Asp-603 serves as a coordination point for L-methionine. Glu-609 lines the 5-methyltetrahydropteroyltri-L-glutamate pocket. Positions 645, 647, and 669 each coordinate Zn(2+). His-698 functions as the Proton donor in the catalytic mechanism. Zn(2+) is bound at residue Cys-730.

This sequence belongs to the vitamin-B12 independent methionine synthase family. Zn(2+) serves as cofactor.

The catalysed reaction is 5-methyltetrahydropteroyltri-L-glutamate + L-homocysteine = tetrahydropteroyltri-L-glutamate + L-methionine. Its pathway is amino-acid biosynthesis; L-methionine biosynthesis via de novo pathway; L-methionine from L-homocysteine (MetE route): step 1/1. Its function is as follows. Catalyzes the transfer of a methyl group from 5-methyltetrahydrofolate to homocysteine resulting in methionine formation. The polypeptide is 5-methyltetrahydropteroyltriglutamate--homocysteine methyltransferase (Bacillus anthracis (strain A0248)).